Reading from the N-terminus, the 678-residue chain is Pescadillo homolog (678 aa).

The disordered stretch occupies residues 265–289 (PQQQTKTNNTTKKSKSTTAAAAATT). Over residues 269–289 (TKTNNTTKKSKSTTAAAAATT) the composition is skewed to low complexity. The BRCT domain maps to 352–442 (DVTTLFKGFH…LLLPYSEYTI (91 aa)). 2 disordered regions span residues 485-601 (TNAE…EDTK) and 626-678 (ATAN…KQKK). The span at 505-518 (SDGESDDEDDEDLE) shows a compositional bias: acidic residues. Basic and acidic residues predominate over residues 519–531 (HLETRYTEELRKE). The span at 541–574 (VDDDDEEEEDGEEDGEEEEEEEDGEEESESESES) shows a compositional bias: acidic residues. Positions 581-640 (VLTKKQRDELNKQKQAEEDTKLAELMIRKKDKWIYNKVKETNQQRATANQTLLEKRNKVE) form a coiled coil. 2 stretches are compositionally biased toward basic and acidic residues: residues 585–601 (KQRD…EDTK) and 633–643 (LEKRNKVESGK). Low complexity predominate over residues 649-678 (VKVAPQPKKPAPLVKKSQQKQQQASKKQKK).

This sequence belongs to the pescadillo family.

The protein localises to the nucleus. It is found in the nucleolus. Its subcellular location is the nucleoplasm. Functionally, required for maturation of ribosomal RNAs and formation of the large ribosomal subunit. The polypeptide is Pescadillo homolog (Dictyostelium discoideum (Social amoeba)).